The following is a 1025-amino-acid chain: AP-2 complex subunit alpha (1025 aa).

The tract at residues 713 to 737 (RSIMVPMPPPSRRNTIDDVNSKISS) is disordered. Phosphothreonine is present on Thr727. Ser733 carries the phosphoserine modification.

It belongs to the adaptor complexes large subunit family. Adaptor protein complex 2 (AP-2) is a heterotetramer composed of two large adaptins (alpha-type subunit APL3 and beta-type subunit APL1), a medium chain (mu-type subunit APM4) and a small adaptin (sigma-type subunit APS2).

It is found in the cell membrane. The protein localises to the membrane. Its subcellular location is the coated pit. In terms of biological role, adaptins are components of the adaptor complexes which link clathrin to receptors in coated vesicles. Clathrin-associated protein complexes are believed to interact with the cytoplasmic tails of membrane proteins, leading to their selection and concentration. Alpha adaptin is a subunit of the plasma membrane adaptor. Facilitates interaction between APL1 and APS2. In Saccharomyces cerevisiae (strain ATCC 204508 / S288c) (Baker's yeast), this protein is AP-2 complex subunit alpha (APL3).